The chain runs to 389 residues: Large envelope protein (389 aa).

The residue at position 1 (Met1) is an N-acetylmethionine. Gly2 is lipidated: N-myristoyl glycine; by host. The pre-S1 stretch occupies residues 2–108 (GTNLSVPNPL…PPLRDSHPQA (107 aa)). A pre-S region spans residues 2–163 (GTNLSVPNPL…SARTGDPVTI (162 aa)). Residues 2-170 (GTNLSVPNPL…VTIMENITSG (169 aa)) lie on the Virion surface; in external conformation side of the membrane. At 2 to 242 (GTNLSVPNPL…PGYRWMCLRR (241 aa)) the chain is on the intravirion; in internal conformation side. The segment covering 77-95 (VSTIPPPASTNRQSGRQPT) has biased composition (polar residues). The disordered stretch occupies residues 77–103 (VSTIPPPASTNRQSGRQPTPISPPLRD). Positions 109-163 (MQWNSTALHQALQDPRVRGLYLPAGGSSSGTVNPAPNIASHISSISARTGDPVTI) are pre-S2. Residues 171–191 (FLGPLLVLQAGFFLLTRILTI) traverse the membrane as a helical segment. The Intravirion; in external conformation segment spans residues 192–242 (PQSLDSWWTSLNFLGGSPVCLGQNSQSPTSNHSPTSCPPICPGYRWMCLRR). The chain crosses the membrane as a helical span at residues 243 to 263 (FIIFLFILLLCLIFLLVLLDY). Over 264–337 (QGMLPVCPLI…WASVRFSWLS (74 aa)) the chain is Virion surface. The N-linked (GlcNAc...) asparagine; by host glycan is linked to Asn309. Residues 338–358 (LLVPFVQWFVGLSPTVWLSAI) form a helical membrane-spanning segment. The Intravirion portion of the chain corresponds to 359-364 (WMMWYW). Residues 365–387 (GPSLYSIVSPFIPLLPIFFCLWV) form a helical membrane-spanning segment. Topologically, residues 388 to 389 (YI) are virion surface.

This sequence belongs to the orthohepadnavirus major surface antigen family. In its internal form (Li-HBsAg), interacts with the capsid protein and with the isoform S. Interacts with host chaperone CANX. In terms of assembly, associates with host chaperone CANX through its pre-S2 N glycan; this association may be essential for isoform M proper secretion. As to quaternary structure, interacts with isoform L. Interacts with the antigens of satellite virus HDV (HDVAgs); this interaction is required for encapsidation of HDV genomic RNA. Post-translationally, isoform M is N-terminally acetylated by host at a ratio of 90%, and N-glycosylated by host at the pre-S2 region. In terms of processing, myristoylated.

The protein resides in the virion membrane. The large envelope protein exists in two topological conformations, one which is termed 'external' or Le-HBsAg and the other 'internal' or Li-HBsAg. In its external conformation the protein attaches the virus to cell receptors and thereby initiating infection. This interaction determines the species specificity and liver tropism. This attachment induces virion internalization predominantly through caveolin-mediated endocytosis. The large envelope protein also assures fusion between virion membrane and endosomal membrane. In its internal conformation the protein plays a role in virion morphogenesis and mediates the contact with the nucleocapsid like a matrix protein. Its function is as follows. The middle envelope protein plays an important role in the budding of the virion. It is involved in the induction of budding in a nucleocapsid independent way. In this process the majority of envelope proteins bud to form subviral lipoprotein particles of 22 nm of diameter that do not contain a nucleocapsid. The polypeptide is Large envelope protein (Hepatitis B virus genotype A2 subtype adw (isolate Japan/Nishioka/1983) (HBV-A)).